We begin with the raw amino-acid sequence, 328 residues long: AA9 family lytic polysaccharide monooxygenase A (328 aa).

Residues 1 to 21 (MPSTKVAALSAVLALASTVAG) form the signal peptide. H22 contacts Cu(2+). Residue H22 is modified to Methylhistidine. Intrachain disulfides connect C77–C199 and C118–C122. A glycan (N-linked (GlcNAc...) asparagine) is linked at N80. Residue H107 coordinates Cu(2+). N-linked (GlcNAc...) asparagine glycosylation is found at N121 and N159. Positions 185 and 194 each coordinate O2. Cu(2+) is bound at residue Y196. O-linked (Man...) serine glycans are attached at residues S235 and S237. Residues T238 and T245 are each glycosylated (O-linked (Man...) threonine).

Belongs to the polysaccharide monooxygenase AA9 family. Requires Cu(2+) as cofactor. In terms of processing, the catalytically essential N-terminal histidine His-22 is post-translationally modified by methylation to prevent protonation of the histidine side chain, and protect the critical active site of the enzyme from oxidative damage.

The protein localises to the secreted. The catalysed reaction is [(1-&gt;4)-beta-D-glucosyl]n+m + reduced acceptor + O2 = 4-dehydro-beta-D-glucosyl-[(1-&gt;4)-beta-D-glucosyl]n-1 + [(1-&gt;4)-beta-D-glucosyl]m + acceptor + H2O.. Functionally, lytic polysaccharide monooxygenase (LPMO) that depolymerizes crystalline and amorphous polysaccharides via the oxidation of scissile alpha- or beta-(1-4)-glycosidic bonds, yielding C1 and C4 oxidation products. Catalysis by LPMOs requires the reduction of the active-site copper from Cu(II) to Cu(I) by a reducing agent and H(2)O(2) or O(2) as a cosubstrate. Shows activity on cellulosic substrates (Avicel, carboxymethylcellulose) and xylan. This chain is AA9 family lytic polysaccharide monooxygenase A, found in Talaromyces verruculosus (Penicillium verruculosum).